The primary structure comprises 438 residues: Drainin (438 aa).

The stretch at 54–104 forms a coiled coil; it reads PKSQEEVLKHQREYEEIQRKAKKTLEREAKEKEKLDAIRKEKERSLIDARK. One can recognise a Rab-GAP TBC domain in the interval 133-374; it reads GLPPAVRGKI…RIWDLVFIEG (242 aa).

Its subcellular location is the contractile vacuole membrane. The protein localises to the cytoplasm. May act as a GTPase-activating protein for Rab family protein(s). Required for osmotic regulation by the contractile vacuole in hypo-osmotic environments. Essential for periodic fusion of the contractile vacuole with the plasma membrane and consequent expulsion of water from the cell body. The sequence is that of Drainin (phgA) from Dictyostelium discoideum (Social amoeba).